We begin with the raw amino-acid sequence, 225 residues long: Adenylate kinase (225 aa).

10–15 (GSGKGT) serves as a coordination point for ATP. Positions 30–59 (ESGAIFRENISKGTEIGKKAKEYIDRGDLV) are NMP. Residues S31, R36, 57 to 59 (DLV), 85 to 88 (GFPR), and Q92 contribute to the AMP site. Positions 126–165 (GRRLCENDNNHPNNIFIDAIKPDGDKCRVCGGALSARSDD) are LID. Residue R127 coordinates ATP. The AMP site is built by R162 and R174. P211 serves as a coordination point for ATP.

The protein belongs to the adenylate kinase family. Monomer.

It localises to the cytoplasm. It carries out the reaction AMP + ATP = 2 ADP. Its pathway is purine metabolism; AMP biosynthesis via salvage pathway; AMP from ADP: step 1/1. Catalyzes the reversible transfer of the terminal phosphate group between ATP and AMP. Plays an important role in cellular energy homeostasis and in adenine nucleotide metabolism. This is Adenylate kinase from Desulfatibacillum aliphaticivorans.